We begin with the raw amino-acid sequence, 122 residues long: Large ribosomal subunit protein uL14 (122 aa).

The protein belongs to the universal ribosomal protein uL14 family. As to quaternary structure, part of the 50S ribosomal subunit. Forms a cluster with proteins L3 and L19. In the 70S ribosome, L14 and L19 interact and together make contacts with the 16S rRNA in bridges B5 and B8.

Its function is as follows. Binds to 23S rRNA. Forms part of two intersubunit bridges in the 70S ribosome. The sequence is that of Large ribosomal subunit protein uL14 from Clostridium perfringens (strain ATCC 13124 / DSM 756 / JCM 1290 / NCIMB 6125 / NCTC 8237 / Type A).